Here is a 357-residue protein sequence, read N- to C-terminus: GTPase Obg (357 aa).

The region spanning 1–159 (MKFVDEAFID…RNLKLELKVL (159 aa)) is the Obg domain. Positions 160 to 334 (ADVGLLGMPN…LVQSIFQHVH (175 aa)) constitute an OBG-type G domain. Residues 166 to 173 (GMPNAGKS), 191 to 195 (FTTLH), 213 to 216 (DIPG), 284 to 287 (NKLD), and 315 to 317 (SAL) contribute to the GTP site. Mg(2+)-binding residues include S173 and T193.

Belongs to the TRAFAC class OBG-HflX-like GTPase superfamily. OBG GTPase family. Monomer. Requires Mg(2+) as cofactor.

It localises to the cytoplasm. In terms of biological role, an essential GTPase which binds GTP, GDP and possibly (p)ppGpp with moderate affinity, with high nucleotide exchange rates and a fairly low GTP hydrolysis rate. Plays a role in control of the cell cycle, stress response, ribosome biogenesis and in those bacteria that undergo differentiation, in morphogenesis control. The polypeptide is GTPase Obg (Acidovorax ebreus (strain TPSY) (Diaphorobacter sp. (strain TPSY))).